The sequence spans 270 residues: Alpha N-terminal protein methyltransferase 1 (270 aa).

S-adenosyl-L-methionine is bound by residues glycine 114, arginine 119, 137-139 (EQN), 165-166 (LQ), and glutamine 180.

Belongs to the methyltransferase superfamily. NTM1 family.

The catalysed reaction is N-terminal L-alanyl-L-prolyl-L-lysyl-[protein] + 3 S-adenosyl-L-methionine = N-terminal N,N,N-trimethyl-L-alanyl-L-prolyl-L-lysyl-[protein] + 3 S-adenosyl-L-homocysteine + 3 H(+). It carries out the reaction N-terminal L-seryl-L-prolyl-L-lysyl-[protein] + 3 S-adenosyl-L-methionine = N-terminal N,N,N-trimethyl-L-seryl-L-prolyl-L-lysyl-[protein] + 3 S-adenosyl-L-homocysteine + 3 H(+). It catalyses the reaction N-terminal L-prolyl-L-prolyl-L-lysyl-[protein] + 2 S-adenosyl-L-methionine = N-terminal N,N-dimethyl-L-prolyl-L-prolyl-L-lysyl-[protein] + 2 S-adenosyl-L-homocysteine + 2 H(+). In terms of biological role, alpha-N-methyltransferase that methylates the N-terminus of target proteins containing the N-terminal motif [Ala/Pro/Ser]-Pro-Lys when the initiator Met is cleaved. Specifically catalyzes mono-, di- or tri-methylation of exposed alpha-amino group of Ala or Ser residue in the [Ala/Ser]-Pro-Lys motif and mono- or di-methylation of Pro in the Pro-Pro-Lys motif. This chain is Alpha N-terminal protein methyltransferase 1, found in Dictyostelium discoideum (Social amoeba).